The chain runs to 108 residues: Large ribosomal subunit protein uL24 (108 aa).

The protein belongs to the universal ribosomal protein uL24 family. As to quaternary structure, part of the 50S ribosomal subunit.

Functionally, one of two assembly initiator proteins, it binds directly to the 5'-end of the 23S rRNA, where it nucleates assembly of the 50S subunit. Its function is as follows. One of the proteins that surrounds the polypeptide exit tunnel on the outside of the subunit. This Geobacter metallireducens (strain ATCC 53774 / DSM 7210 / GS-15) protein is Large ribosomal subunit protein uL24.